The chain runs to 419 residues: Gamma-glutamyl phosphate reductase (419 aa).

It belongs to the gamma-glutamyl phosphate reductase family.

Its subcellular location is the cytoplasm. It catalyses the reaction L-glutamate 5-semialdehyde + phosphate + NADP(+) = L-glutamyl 5-phosphate + NADPH + H(+). Its pathway is amino-acid biosynthesis; L-proline biosynthesis; L-glutamate 5-semialdehyde from L-glutamate: step 2/2. Catalyzes the NADPH-dependent reduction of L-glutamate 5-phosphate into L-glutamate 5-semialdehyde and phosphate. The product spontaneously undergoes cyclization to form 1-pyrroline-5-carboxylate. This Bordetella avium (strain 197N) protein is Gamma-glutamyl phosphate reductase.